A 186-amino-acid polypeptide reads, in one-letter code: UPF0301 protein CV_3909 (186 aa).

The protein belongs to the UPF0301 (AlgH) family.

The polypeptide is UPF0301 protein CV_3909 (Chromobacterium violaceum (strain ATCC 12472 / DSM 30191 / JCM 1249 / CCUG 213 / NBRC 12614 / NCIMB 9131 / NCTC 9757 / MK)).